Reading from the N-terminus, the 455-residue chain is Oxysterols receptor LXR-beta (455 aa).

Over residues 1–10 the composition is skewed to polar residues; it reads MSTPTTNSVD. The tract at residues 1 to 53 is disordered; the sequence is MSTPTTNSVDTPLPGNGPSTPSSSPGGKEDGPEPCPGGADPDVPSTDGADSAS. The transactivation AF-1; required for ligand-independent transactivation function stretch occupies residues 1-80; the sequence is MSTPTTNSVD…GPAPKMLGDE (80 aa). Over residues 14–26 the composition is skewed to low complexity; it reads PGNGPSTPSSSPG. Positions 79–156 form a DNA-binding region, nuclear receptor; the sequence is DELCQVCGDT…AGMREQCVLS (78 aa). 2 NR C4-type zinc fingers span residues 82–102 and 120–144; these read CQVC…CEGC and CRGG…LRKC. The interval 164-210 is disordered; it reads KIRKQQQQQQQQSSPTGPGVSSSSPASGPGASPGGSDGGGQGSGEGE. Over residues 168–193 the composition is skewed to low complexity; the sequence is QQQQQQQQSSPTGPGVSSSSPASGPG. Residues 194 to 210 show a composition bias toward gly residues; it reads ASPGGSDGGGQGSGEGE. The tract at residues 214 to 455 is transactivation AF-2; required for ligand-dependent transactivation function; mediates interaction with CCAR2; sequence LTAAQELMIQ…LLSEIWDVHE (242 aa). The region spanning 217–455 is the NR LBD domain; that stretch reads AQELMIQQLV…LLSEIWDVHE (239 aa). Residues K404 and K442 each participate in a glycyl lysine isopeptide (Lys-Gly) (interchain with G-Cter in SUMO2) cross-link.

This sequence belongs to the nuclear hormone receptor family. NR1 subfamily. As to quaternary structure, forms a heterodimer with RXR. Interacts with CCAR2 (via N-terminus) in a ligand-independent manner. Interacts (when sumoylated) with GPS2; interaction with GPS2 onto hepatic acute phase protein promoters prevents N-Cor corepressor complex dissociation. Interacts with ABCA12 and ABCA1; this interaction is required for ABCA1 localization to the cell surface and is necessary for its normal activity and stability. Sumoylated by SUMO2 at Lys-404 and Lys-442 during the hepatic acute phase response, leading to promote interaction with GPS2 and prevent N-Cor corepressor complex dissociation.

It localises to the nucleus. Functionally, nuclear receptor that exhibits a ligand-dependent transcriptional activation activity. Binds preferentially to double-stranded oligonucleotide direct repeats having the consensus half-site sequence 5'-AGGTCA-3' and 4-nt spacing (DR-4). Regulates cholesterol uptake through MYLIP-dependent ubiquitination of LDLR, VLDLR and LRP8; DLDLR and LRP8. Interplays functionally with RORA for the regulation of genes involved in liver metabolism. Induces LPCAT3-dependent phospholipid remodeling in endoplasmic reticulum (ER) membranes of hepatocytes, driving SREBF1 processing and lipogenesis. Via LPCAT3, triggers the incorporation of arachidonate into phosphatidylcholines of ER membranes, increasing membrane dynamics and enabling triacylglycerols transfer to nascent very low-density lipoprotein (VLDL) particles. Via LPCAT3 also counteracts lipid-induced ER stress response and inflammation, likely by modulating SRC kinase membrane compartmentalization and limiting the synthesis of lipid inflammatory mediators. Plays an anti-inflammatory role during the hepatic acute phase response by acting as a corepressor: inhibits the hepatic acute phase response by preventing dissociation of the N-Cor corepressor complex. The chain is Oxysterols receptor LXR-beta (NR1H2) from Bos taurus (Bovine).